Consider the following 545-residue polypeptide: Chaperonin GroEL (545 aa).

Residues 30 to 33 (TLGP), Lys51, 87 to 91 (DGTTT), Gly415, and Asp495 each bind ATP.

This sequence belongs to the chaperonin (HSP60) family. Forms a cylinder of 14 subunits composed of two heptameric rings stacked back-to-back. Interacts with the co-chaperonin GroES.

The protein localises to the cytoplasm. It carries out the reaction ATP + H2O + a folded polypeptide = ADP + phosphate + an unfolded polypeptide.. Functionally, together with its co-chaperonin GroES, plays an essential role in assisting protein folding. The GroEL-GroES system forms a nano-cage that allows encapsulation of the non-native substrate proteins and provides a physical environment optimized to promote and accelerate protein folding. The sequence is that of Chaperonin GroEL from Yersinia pestis bv. Antiqua (strain Antiqua).